Here is a 430-residue protein sequence, read N- to C-terminus: Sesquiterpene synthase 15 (430 aa).

The Mg(2+) site is built by D182, D186, and E335. The DDXXD motif signature appears at 182 to 186 (DDIYD).

The protein belongs to the terpene synthase family. Tpsa subfamily. The cofactor is Mg(2+). Requires Mn(2+) as cofactor.

Its pathway is secondary metabolite biosynthesis; terpenoid biosynthesis. Functionally, sesquiterpene synthase involved in the biosynthesis of volatile compounds. No activity detected with geranyl diphosphate (GPP) and farnesyl diphosphate (FPP) as substrates. This chain is Sesquiterpene synthase 15, found in Solanum lycopersicum (Tomato).